An 88-amino-acid polypeptide reads, in one-letter code: Homeobox protein knotted-1-like 3 (88 aa).

The ELK domain maps to 4-24 (ELKKQLLRKYSGCLGNLRKEL). Residues 25–88 (CKKRKKDKLP…NQRKRHWKPS (64 aa)) constitute a DNA-binding region (homeobox; TALE-type).

It belongs to the TALE/KNOX homeobox family. In terms of tissue distribution, strongly expressed in ear inflorescence primordia and shoot meristem. Weakly expressed in embryos. Absent from leaves.

Its subcellular location is the nucleus. Probably binds to the DNA sequence 5'-TGAC-3'. This Zea mays (Maize) protein is Homeobox protein knotted-1-like 3 (KNOX3).